Consider the following 340-residue polypeptide: Sesquiterpene synthase 6 (340 aa).

Residues Asp-90, Asn-229, Ser-233, and Glu-237 each contribute to the Mg(2+) site. Residues 90–94 (DDITD) carry the DDXXD motif motif. Residues 229–237 (NDIYSFNNE) carry the NSE/DTE motif motif. Arg-316 and Tyr-317 together coordinate (2E,6E)-farnesyl diphosphate.

This sequence belongs to the terpene synthase family. Mg(2+) serves as cofactor.

The catalysed reaction is (2E,6E)-farnesyl diphosphate = delta-cadinene + diphosphate. It catalyses the reaction (2E,6E)-farnesyl diphosphate = bicyclogermacrene + diphosphate. Terpene cyclase that catalyzes the cyclization of farnesyl diphosphate (FPP) to various sesquiterpenes, including bicycloelemene, alpha-gurjunene, 9-epi-caryophylene, bicyclosesquiphellandrene, bicyclogermacrene and delta-cadinene. This Postia placenta (strain ATCC 44394 / Madison 698-R) (Brown rot fungus) protein is Sesquiterpene synthase 6.